The following is a 1010-amino-acid chain: Polyhomeotic-like protein 1 (1010 aa).

Low complexity predominate over residues 1-22 (METESEQNSSSTNGSSSSGASS). 6 disordered regions span residues 1 to 25 (METESEQNSSSTNGSSSSGASSRPQ), 212 to 243 (NQQASAQGPQMPGSTQKAIPPGASPVSGLSQT), 259 to 312 (GQSL…TGVV), 444 to 506 (QQQG…SKPP), 565 to 588 (GAVQPGQAHLASSPPSSQAAPGAL), and 646 to 678 (KRKAESEEERDDLSALASVLPTKASPAAESPKV). Residues 212-228 (NQQASAQGPQMPGSTQK) are compositionally biased toward polar residues. Residues 279 to 292 (MGPGGGGQAPGGLG) show a composition bias toward gly residues. Residues 453-463 (PQPPQVPPTQQ) show a composition bias toward pro residues. The span at 464–480 (VPPSQSQQQAQTLVVQP) shows a compositional bias: low complexity. The span at 488–500 (TLPPEPTSKPPIP) shows a compositional bias: pro residues. The span at 575–587 (ASSPPSSQAAPGA) shows a compositional bias: low complexity. At S651 the chain carries Phosphoserine. K769 participates in a covalent cross-link: Glycyl lysine isopeptide (Lys-Gly) (interchain with G-Cter in SUMO2). The interval 772 to 794 (QAGLPTGLNESQPSGPLGGDSPS) is disordered. An FCS-type zinc finger spans residues 797–831 (LEKKANLLKCEYCGKYAPAEQFRGSKRFCSMTCAK). Zn(2+)-binding residues include C806, C809, C825, and C829. Positions 854–928 (ASYARVRRRG…LGNTITTPST (75 aa)) are disordered. S904 carries the post-translational modification Phosphoserine. A Phosphothreonine modification is found at T928. Residues 946-1010 (WSVEEVYEFI…CAKINVLKET (65 aa)) form the SAM domain.

Homodimer. Component of a PRC1-like complex. Interacts with the SAM domain of SCMH1 via its SAM domain in vitro. Interacts with RNF2 and CBX7. Interacts with PHC2. Interacts with BMI1. Highly expressed in testis with lower levels in most other tissues. Expressed in embryonic stem cells.

The protein resides in the nucleus. In terms of biological role, component of a Polycomb group (PcG) multiprotein PRC1-like complex, a complex class required to maintain the transcriptionally repressive state of many genes, including Hox genes, throughout development. PcG PRC1 complex acts via chromatin remodeling and modification of histones; it mediates monoubiquitination of histone H2A 'Lys-119', rendering chromatin heritably changed in its expressibility. Required for proper control of cellular levels of GMNN expression. This chain is Polyhomeotic-like protein 1, found in Mus musculus (Mouse).